The following is a 669-amino-acid chain: NADH-ubiquinone oxidoreductase chain 5 (669 aa).

Transmembrane regions (helical) follow at residues 3-23 (LLIVILPLIGSFAAGFFGRFL), 50-70 (VALCASACYIKIAPWIFSELF), 81-100 (LTVILLLVVTIVSSLVHIYS), 119-139 (IFTFFMLMLVTGDNFIQLFLG), 178-198 (LALGIMGCFTIFQTVDFSTIF), 211-231 (FLFCNMGFHAITVICILVFIG), 253-273 (TPVSALIHAATMVTAGVFMIA), 286-306 (LIVITFVGAMTSFFAATTGIL), 322-342 (LGYMIFACGISNYSVSVFHLM), 377-397 (LLPFTYAMMLIGSLSLIGFPF), 423-443 (FWLGSVSVFFTSYYSFRLLFL), 464-484 (ILMAIPLILLAFGSIFVGYLA), 522-542 (LIPILFSTLGSFVAYSVNFVV), 628-648 (AFVMLLGLTIFISVIGLWDFI), and 649-669 (SFWVDNRLYFIYIVSFLFINI).

It belongs to the complex I subunit 5 family.

The protein resides in the mitochondrion inner membrane. The enzyme catalyses a ubiquinone + NADH + 5 H(+)(in) = a ubiquinol + NAD(+) + 4 H(+)(out). In terms of biological role, core subunit of the mitochondrial membrane respiratory chain NADH dehydrogenase (Complex I) that is believed to belong to the minimal assembly required for catalysis. Complex I functions in the transfer of electrons from NADH to the respiratory chain. The immediate electron acceptor for the enzyme is believed to be ubiquinone. This is NADH-ubiquinone oxidoreductase chain 5 (ND5) from Marchantia polymorpha (Common liverwort).